The following is a 693-amino-acid chain: MPEVSSGGGCGACGRRHGADASCPTLVRADVRAGGTAHPRCAPVVEAQDPLVGVRCGSFRLVRRLGRGGMGAVYLGEHVSIGSRVAVKVLHAHLTMYPELVQRFHAEARAVNLIGHENIVSIFDMDATPPRPYLIMEFLDGAPLSAWVGTPLAAGAVVSVLSQVCDALQAAHARGIVHRDLKPDNIFLVRRNGNAPFVKVLDFGIAKLADAHMPQTHAGIIVGTPEYMAPEQSLGRGVDGRADLYALGVIAYQLLTGRLPFNDEGLAAQLVAHQLRPPPPPSSVYPAVSAALEHVILRALAKKPEDRYASIAAFRNALQVALAEHVRVSARKTRPGGLAVLERAPVAPDMPTEGQSRGRLGVDARAGHVPSSLASTSQRRLAPAAPAVPRASLVEVPVQVVLRPGESPVRLRGSGLSRGGLFLHGGRVLPPLCSRLPVVLELASGPLSVMCEVVRVVPPAQARVWGMPTGFGVQFVEATAVLKAAVDALLQGEPVRAVPQVPLTEDPAVARLLEAWRQRSAGDAYAVLALEPDSDMGTVRLRTREAWRSLESLEQHSLTPPQRAQVDALRVRVREAAEALGATVQRALYDAWRGNHRGVAKCLEAGLTAEQLESLRREFLARRPQAMGTARSHFQSGGALERDGQLSQALDQYERGLKLAPLEVDMLQRYRRLRRVLGGRATAPTGHDRARSP.

A Protein kinase domain is found at 59-328 (FRLVRRLGRG…QVALAEHVRV (270 aa)). ATP contacts are provided by residues 65 to 73 (LGRGGMGAV) and lysine 88. The Proton acceptor role is filled by aspartate 180. The PilZ domain maps to 393 to 491 (LVEVPVQVVL…LKAAVDALLQ (99 aa)). One copy of the TPR repeat lies at 630–663 (ARSHFQSGGALERDGQLSQALDQYERGLKLAPLE).

Belongs to the protein kinase superfamily. Ser/Thr protein kinase family. Post-translationally, autophosphorylated.

It catalyses the reaction L-seryl-[protein] + ATP = O-phospho-L-seryl-[protein] + ADP + H(+). It carries out the reaction L-threonyl-[protein] + ATP = O-phospho-L-threonyl-[protein] + ADP + H(+). With respect to regulation, may be regulated by calcium or a calmodulin-like protein. Plays an essential role in proper timing of early development events. In Myxococcus xanthus, this protein is Serine/threonine-protein kinase Pkn1 (pkn1).